The primary structure comprises 421 residues: Zinc metalloproteinase-disintegrin-like crotastatin (421 aa).

The region spanning 10 to 206 (KYVKLFLVAD…NMPQCILKKP (197 aa)) is the Peptidase M12B domain. N-linked (GlcNAc...) asparagine glycosylation is present at asparagine 29. 3 cysteine pairs are disulfide-bonded: cysteine 121–cysteine 201, cysteine 161–cysteine 185, and cysteine 163–cysteine 168. Histidine 146 lines the Zn(2+) pocket. Glutamate 147 is an active-site residue. Histidine 150 and histidine 156 together coordinate Zn(2+). In terms of domain architecture, Disintegrin spans 214 to 299 (PAVCGNYFVE…TECTDRFQRN (86 aa)). Residues valine 216, asparagine 219, phenylalanine 221, glutamate 223, glutamate 226, and aspartate 229 each contribute to the Ca(2+) site. Disulfide bonds link cysteine 217/cysteine 246, cysteine 228/cysteine 241, cysteine 230/cysteine 236, cysteine 240/cysteine 263, cysteine 254/cysteine 260, cysteine 259/cysteine 285, cysteine 272/cysteine 292, cysteine 279/cysteine 310, cysteine 303/cysteine 315, cysteine 322/cysteine 372, cysteine 337/cysteine 383, cysteine 350/cysteine 360, cysteine 367/cysteine 409, and cysteine 403/cysteine 414. Positions 278-280 (ECD) match the D/ECD-tripeptide motif. The Ca(2+) site is built by aspartate 280, methionine 281, aspartate 283, aspartate 294, and arginine 295.

Belongs to the venom metalloproteinase (M12B) family. P-III subfamily. P-IIIc sub-subfamily. Homodimer; disulfide-linked. It depends on Zn(2+) as a cofactor. In terms of tissue distribution, expressed by the venom gland.

The protein localises to the secreted. In terms of biological role, snake venom zinc metalloprotease that induces apoptosis in vascular endothelial cells (VEC), without degrading the extracellular matrix (it cannot cleave collagen) or inhibiting adhesion of VEC. Has also fibrinogenolytic and hemorrhagic activities. The protein is Zinc metalloproteinase-disintegrin-like crotastatin of Crotalus durissus terrificus (South American rattlesnake).